Reading from the N-terminus, the 123-residue chain is uncharacterized protein (123 aa).

One can recognise a Rhodanese domain in the interval 17 to 117 (SNDNAFLVDV…NNQDKGWKQN (101 aa)).

This is an uncharacterized protein from Rickettsia rickettsii.